The sequence spans 31 residues: Conotoxin pc6d (31 aa).

Intrachain disulfides connect C2–C20, C9–C25, and C19–C29.

This sequence belongs to the conotoxin O1 superfamily. As to expression, expressed by the venom duct.

The protein localises to the secreted. This chain is Conotoxin pc6d, found in Conus pictus (Cone snail).